The primary structure comprises 212 residues: Peptide methionine sulfoxide reductase MsrA (212 aa).

The active site involves Cys-52.

It belongs to the MsrA Met sulfoxide reductase family.

It catalyses the reaction L-methionyl-[protein] + [thioredoxin]-disulfide + H2O = L-methionyl-(S)-S-oxide-[protein] + [thioredoxin]-dithiol. The catalysed reaction is [thioredoxin]-disulfide + L-methionine + H2O = L-methionine (S)-S-oxide + [thioredoxin]-dithiol. Functionally, has an important function as a repair enzyme for proteins that have been inactivated by oxidation. Catalyzes the reversible oxidation-reduction of methionine sulfoxide in proteins to methionine. This is Peptide methionine sulfoxide reductase MsrA from Salmonella paratyphi A (strain AKU_12601).